Reading from the N-terminus, the 493-residue chain is Cobyric acid synthase (493 aa).

The region spanning 246–440 (PIDIAVIKMP…IHGVFDGVSF (195 aa)) is the GATase cobBQ-type domain. C326 acts as the Nucleophile in catalysis. Residue H432 is part of the active site.

It belongs to the CobB/CobQ family. CobQ subfamily.

The protein operates within cofactor biosynthesis; adenosylcobalamin biosynthesis. Functionally, catalyzes amidations at positions B, D, E, and G on adenosylcobyrinic A,C-diamide. NH(2) groups are provided by glutamine, and one molecule of ATP is hydrogenolyzed for each amidation. The sequence is that of Cobyric acid synthase from Clostridium botulinum (strain Langeland / NCTC 10281 / Type F).